The following is a 785-amino-acid chain: Pre-tRNA-processing protein PTA1 (785 aa).

Residues 487–544 (INSVPSSSSSKRKSDDDDDGNDNEEVGNDGPTANSKKIKMETEPLAEEPEEPEDDDRM) form a disordered region. Serine 500 bears the Phosphoserine mark. Acidic residues-rich tracts occupy residues 502–513 (DDDDGNDNEEVG) and 530–542 (PLAE…EDDD).

As to quaternary structure, component of the cleavage and polyadenylation factor (CPF) complex, which is composed of PTI1, SYC1, SSU72, GLC7, MPE1, REF2, PFS2, PTA1, YSH1/BRR5, SWD2, CFT2/YDH1, YTH1, CFT1/YHH1, FIP1 and PAP1. Component of the APT complex, which is a subcomplex of CPF, and is composed of PTI1, SYC1, SSU72, GLC7, REF2, PTA1 and SWD2.

It is found in the nucleus. Functionally, essential in pre-tRNA processing. Component of the cleavage and polyadenylation factor (CPF) complex, which plays a key role in polyadenylation-dependent pre-mRNA 3'-end formation and cooperates with cleavage factors including the CFIA complex and NAB4/CFIB. Component of the APT complex, which may be involved in polyadenylation-independent transcript 3'-end formation. This chain is Pre-tRNA-processing protein PTA1 (PTA1), found in Saccharomyces cerevisiae (strain ATCC 204508 / S288c) (Baker's yeast).